Consider the following 162-residue polypeptide: Caveolin-2 (162 aa).

Topologically, residues 1–86 are cytoplasmic; it reads MGLETEKADV…FEVSKYVIYK (86 aa). The residue at position 19 (Tyr19) is a Phosphotyrosine; by SRC. A phosphoserine mark is found at Ser20, Ser23, and Ser36. Positions 87–107 form an intramembrane region, helical; the sequence is FLTLLLAMPMAFAAGVLFATL. Residues 108–162 lie on the Cytoplasmic side of the membrane; it reads SCLHIWIIMPFVKTCLMVLPSVQTIWKSVTDAVIAPLCSSVGRSFSSVSLQVSHD.

It belongs to the caveolin family. Monomer or homodimer. Interacts with CAV1; the interaction forms a stable heterooligomeric complex that is required for targeting to lipid rafts and for caveolae formation. Tyrosine phosphorylated forms do not form heterooligomers with the Tyr-19-phosphorylated form existing as a monomer or dimer. Interacts (tyrosine phosphorylated form) with the SH2 domain-containing proteins, RASA1, NCK1 and SRC. Interacts (tyrosine phosphorylated form) with INSR. Interacts (Tyr-19 phosphorylated form) with MAPK1 (phosphorylated form); the interaction, promoted by insulin, leads to nuclear location and MAPK1 activation. Interacts with STAT3; the interaction is increased on insulin-induced tyrosine phosphorylation leading to STAT activation. Phosphorylated on serine and tyrosine residues. CAV1 promotes phosphorylation on Ser-23 which then targets the complex to the plasma membrane, lipid rafts and caveolae. Phosphorylation on Ser-36 appears to modulate mitosis in endothelial cells. Phosphorylation on Tyr-19 is required for insulin-induced phosphorylation of MAPK1 and DNA binding of STAT3. Tyrosine phosphorylation is induced by both EGF and insulin.

Its subcellular location is the nucleus. The protein resides in the cytoplasm. It localises to the golgi apparatus membrane. It is found in the cell membrane. The protein localises to the membrane. Its subcellular location is the caveola. Its function is as follows. May act as a scaffolding protein within caveolar membranes. Interacts directly with G-protein alpha subunits and can functionally regulate their activity. Acts as an accessory protein in conjunction with CAV1 in targeting to lipid rafts and driving caveolae formation. The Ser-36 phosphorylated form has a role in modulating mitosis in endothelial cells. Positive regulator of cellular mitogenesis of the MAPK signaling pathway. Required for the insulin-stimulated nuclear translocation and activation of MAPK1 and STAT3, and the subsequent regulation of cell cycle progression. This chain is Caveolin-2 (CAV2), found in Canis lupus familiaris (Dog).